The chain runs to 833 residues: pre-rRNA 2'-O-ribose RNA methyltransferase (833 aa).

S-adenosyl-L-methionine-binding residues include G57, W59, D77, D93, and D118. The active-site Proton acceptor is the K158. 5 disordered regions span residues 323 to 349, 363 to 453, 475 to 640, 730 to 767, and 779 to 833; these read KLDNPDEEETEKPEEKKELTAEEMEEN, KKKR…DEYL, LDDV…SDED, LGKKMEKTRDKASSIVDNPEMSNREKSKAIEKLYSGTD, and IAKK…KNKK. Residues 336–386 are a coiled coil; that stretch reads EEKKELTAEEMEENLQEEMKEYLALVEKKKRKEKKRQNELKRKHQRKIELT. Residues 363–381 show a composition bias toward basic residues; it reads KKKRKEKKRQNELKRKHQR. Residues 382–396 are compositionally biased toward basic and acidic residues; sequence KIELTMHIPGDKIEE. A compositionally biased stretch (acidic residues) spans 423-441; the sequence is SSDEFDSDDSDDDDDDDNN. A coiled-coil region spans residues 455–485; the sequence is QQLDEQYKLYQQRIRKKAAKLDDVKVKKDKI. Positions 475–486 are enriched in basic and acidic residues; it reads LDDVKVKKDKIG. 2 stretches are compositionally biased toward acidic residues: residues 490 to 503 and 542 to 556; these read YNEDDEEFVEEQEE and SESEPEQDGDDDQDD. Residues 557–566 show a composition bias toward basic and acidic residues; the sequence is ENNKPIDISK. Composition is skewed to acidic residues over residues 605–614 and 626–640; these read DKDDQDDDDD and PVQEEVEYESDSDED. Basic and acidic residues-rich tracts occupy residues 732–741, 751–767, and 794–806; these read KKMEKTRDKA, SNREKSKAIEKLYSGTD, and KIVDKRMKKDLRA.

The protein belongs to the class I-like SAM-binding methyltransferase superfamily. RNA methyltransferase RlmE family. SPB1 subfamily.

It localises to the nucleus. Its subcellular location is the nucleolus. It catalyses the reaction a ribonucleotide in rRNA + S-adenosyl-L-methionine = a 2'-O-methylribonucleotide in rRNA + S-adenosyl-L-homocysteine + H(+). In terms of biological role, RNA 2'-O-methyltransferase involved in the maturation of rRNA and in the biogenesis of ribosomal subunits. The polypeptide is pre-rRNA 2'-O-ribose RNA methyltransferase (fsjC) (Dictyostelium discoideum (Social amoeba)).